Reading from the N-terminus, the 176-residue chain is ATP synthase subunit delta (176 aa).

Belongs to the ATPase delta chain family. F-type ATPases have 2 components, F(1) - the catalytic core - and F(0) - the membrane proton channel. F(1) has five subunits: alpha(3), beta(3), gamma(1), delta(1), epsilon(1). F(0) has three main subunits: a(1), b(2) and c(10-14). The alpha and beta chains form an alternating ring which encloses part of the gamma chain. F(1) is attached to F(0) by a central stalk formed by the gamma and epsilon chains, while a peripheral stalk is formed by the delta and b chains.

The protein resides in the cell membrane. F(1)F(0) ATP synthase produces ATP from ADP in the presence of a proton or sodium gradient. F-type ATPases consist of two structural domains, F(1) containing the extramembraneous catalytic core and F(0) containing the membrane proton channel, linked together by a central stalk and a peripheral stalk. During catalysis, ATP synthesis in the catalytic domain of F(1) is coupled via a rotary mechanism of the central stalk subunits to proton translocation. In terms of biological role, this protein is part of the stalk that links CF(0) to CF(1). It either transmits conformational changes from CF(0) to CF(1) or is implicated in proton conduction. In Hamiltonella defensa subsp. Acyrthosiphon pisum (strain 5AT), this protein is ATP synthase subunit delta.